The primary structure comprises 387 residues: NAD(P)H oxidoreductase RTN4IP1, mitochondrial (387 aa).

The N-terminal 27 residues, 1–27 (MLMCRRWLVCSLRCHYRSFSFSAARRT), are a transit peptide targeting the mitochondrion. Positions 38–379 (GKNDVLRFTK…QGHARGKTVV (342 aa)) constitute an Enoyl reductase (ER) domain. The NADPH site is built by Ser200, Gly202, Val203, Ser223, Tyr241, Leu286, Gly327, Phe329, His372, Ala373, and Arg374.

This sequence belongs to the zinc-containing alcohol dehydrogenase family. Quinone oxidoreductase subfamily.

The protein resides in the mitochondrion matrix. Its subcellular location is the mitochondrion outer membrane. It carries out the reaction a 3-demethylubiquinone + NADH + 2 H(+) = a 3-demethylubiquinol + NAD(+). The enzyme catalyses a 3-demethylubiquinone + NADPH + 2 H(+) = a 3-demethylubiquinol + NADP(+). It catalyses the reaction 3-demethylubiquinone-10 + NADH + 2 H(+) = 3-demethylubiquinol-10 + NAD(+). The catalysed reaction is 3-demethylubiquinone-10 + NADPH + 2 H(+) = 3-demethylubiquinol-10 + NADP(+). It participates in cofactor biosynthesis; ubiquinone biosynthesis. NAD(P)H oxidoreductase involved in the ubiquinone biosynthetic pathway. Required for the O-methyltransferase activity of COQ3. Able to catalyze the oxidoreduction of 3-demethylubiquinone into 3-demethylubiquinol in vitro. However, it is unclear if 3-demethylubiquinone constitutes a substrate in vivo. May also play a role in the regulation of retinal ganglion cell (RGC) neurite outgrowth, and hence in the development of the inner retina and optic nerve. In Danio rerio (Zebrafish), this protein is NAD(P)H oxidoreductase RTN4IP1, mitochondrial (rtn4ip1).